A 375-amino-acid chain; its full sequence is DNA replication and repair protein RecF (375 aa).

Glycine 30–threonine 37 is a binding site for ATP.

The protein belongs to the RecF family.

The protein localises to the cytoplasm. In terms of biological role, the RecF protein is involved in DNA metabolism; it is required for DNA replication and normal SOS inducibility. RecF binds preferentially to single-stranded, linear DNA. It also seems to bind ATP. In Bacillus cereus (strain ZK / E33L), this protein is DNA replication and repair protein RecF.